An 85-amino-acid polypeptide reads, in one-letter code: uncharacterized protein (85 aa).

This is an uncharacterized protein from Saimiriine herpesvirus 2 (strain 488) (SaHV-2).